The chain runs to 483 residues: Regulatory protein ViaA (483 aa).

It belongs to the ViaA family. In terms of assembly, homodimer. Interacts with RavA.

The protein resides in the cytoplasm. Its function is as follows. Component of the RavA-ViaA chaperone complex, which may act on the membrane to optimize the function of some of the respiratory chains. ViaA stimulates the ATPase activity of RavA. The sequence is that of Regulatory protein ViaA from Salmonella typhi.